A 358-amino-acid polypeptide reads, in one-letter code: MPLMNPLNPWPLESSNPLIAVLVSGGIDSLVAAHLLKQSGADVTAIHFLTGYEPEDRAGRLEKLFTQMDIPVFIFDCRTVFQSNVVDYFTAAYLRGETPNPCMVCNSRIKFGACMDYARSLGADAVATGHYCRTTKDPDGVRLWKGADPAKEQSYFLAFLSQDQLGRARFPLERMTKDQVRAHAARHGLVPIESKESQDVCFIRGEECADFIEAQVPAIPGPGPIEDMTGRLIGTHSGLHRFTVGQRRGINCPAEQPYYVAALDMARNCLKVGFRQDLFVPVCRVAQVNWIPDRPKGSMNVSVKIRYNQTEVPARLTALGETDAVVEFVTPQFAVAPGQGAVFYDGDAVLGGGIIRAE.

Residues 22–29 (LVSGGIDS) and phenylalanine 48 contribute to the ATP site. Cysteine 105 (nucleophile) is an active-site residue. Residues cysteine 105 and cysteine 201 are joined by a disulfide bond. Glycine 129 contributes to the ATP binding site. The interaction with tRNA stretch occupies residues 151–153 (KEQ). The active-site Cysteine persulfide intermediate is cysteine 201. The segment at 306 to 307 (RY) is interaction with tRNA.

It belongs to the MnmA/TRMU family.

The protein resides in the cytoplasm. It catalyses the reaction S-sulfanyl-L-cysteinyl-[protein] + uridine(34) in tRNA + AH2 + ATP = 2-thiouridine(34) in tRNA + L-cysteinyl-[protein] + A + AMP + diphosphate + H(+). Functionally, catalyzes the 2-thiolation of uridine at the wobble position (U34) of tRNA, leading to the formation of s(2)U34. This is tRNA-specific 2-thiouridylase MnmA from Desulfosudis oleivorans (strain DSM 6200 / JCM 39069 / Hxd3) (Desulfococcus oleovorans).